A 375-amino-acid polypeptide reads, in one-letter code: 23S rRNA (uracil(747)-C(5))-methyltransferase RlmC (375 aa).

[4Fe-4S] cluster is bound by residues C3, C11, C14, and C87. Residues Q212, F241, E262, and N307 each coordinate S-adenosyl-L-methionine. C334 serves as the catalytic Nucleophile.

This sequence belongs to the class I-like SAM-binding methyltransferase superfamily. RNA M5U methyltransferase family. RlmC subfamily.

It carries out the reaction uridine(747) in 23S rRNA + S-adenosyl-L-methionine = 5-methyluridine(747) in 23S rRNA + S-adenosyl-L-homocysteine + H(+). In terms of biological role, catalyzes the formation of 5-methyl-uridine at position 747 (m5U747) in 23S rRNA. The sequence is that of 23S rRNA (uracil(747)-C(5))-methyltransferase RlmC from Escherichia fergusonii (strain ATCC 35469 / DSM 13698 / CCUG 18766 / IAM 14443 / JCM 21226 / LMG 7866 / NBRC 102419 / NCTC 12128 / CDC 0568-73).